The chain runs to 1383 residues: WD repeat-containing protein dyf-2 (1383 aa).

WD repeat units follow at residues 32 to 71 (EHGS…IDAL), 72 to 112 (NPTG…TDTV), 118 to 157 (SSKE…RIAV), 160 to 198 (KHQR…VSTT), and 337 to 376 (ETEK…LAAS). TPR repeat units lie at residues 756-789 (EEKN…MEAL), 810-847 (PKEI…NPQN), 885-918 (RVVK…DRAA), 940-973 (PKIH…DNQV), 996-1029 (IEGA…QEAF), 1031-1053 (LAEK…NISQ), and 1064-1097 (VNDM…ENCV).

As to quaternary structure, component of the IFT complex A (IFT-A) composed of at least che-11, daf-10, dyf-2, ift-139, ift-43 and ifta-1. In terms of tissue distribution, expressed in ciliated sensory neurons.

It localises to the cell projection. The protein resides in the cilium. Its function is as follows. Component of the IFT complex A (IFT-A), a complex required for retrograde ciliary transport. Moves along the ciliary axoneme and is involved in the assembly, localization and the movement of other intraflagellar transport (IFT) proteins along the cilia axoneme. May also associate with the BBSome complex in order to mediate ciliary transport. Regulates cilia biogenesis, morphology and sensitivity to environmental cues. This is WD repeat-containing protein dyf-2 from Caenorhabditis elegans.